The following is a 399-amino-acid chain: Phosphoglycerate kinase (399 aa).

Residues 22–24 (DFN), Arg-38, 61–64 (HLGR), Arg-120, and Arg-153 each bind substrate. ATP-binding positions include Lys-206, Gly-297, Glu-328, and 354–357 (GGDT).

This sequence belongs to the phosphoglycerate kinase family. In terms of assembly, monomer.

Its subcellular location is the cytoplasm. It catalyses the reaction (2R)-3-phosphoglycerate + ATP = (2R)-3-phospho-glyceroyl phosphate + ADP. It participates in carbohydrate degradation; glycolysis; pyruvate from D-glyceraldehyde 3-phosphate: step 2/5. The sequence is that of Phosphoglycerate kinase from Campylobacter concisus (strain 13826).